The following is a 320-amino-acid chain: Methenyltetrahydromethanopterin cyclohydrolase (320 aa).

The protein belongs to the MCH family.

It localises to the cytoplasm. It catalyses the reaction 5,10-methenyl-5,6,7,8-tetrahydromethanopterin + H2O = N(5)-formyl-5,6,7,8-tetrahydromethanopterin + H(+). Catalyzes the hydrolysis of methenyl-H(4)MPT(+) to 5-formyl-H(4)MPT. This chain is Methenyltetrahydromethanopterin cyclohydrolase, found in Methanococcoides burtonii (strain DSM 6242 / NBRC 107633 / OCM 468 / ACE-M).